The primary structure comprises 778 residues: Serine/threonine-protein kinase BRSK1 (778 aa).

The span at 1–12 shows a compositional bias: gly residues; it reads MSSGSKEGGGGS. Residues 1-29 form a disordered region; that stretch reads MSSGSKEGGGGSPAYHLPHPHPHPPQHAQ. In terms of domain architecture, Protein kinase spans 34-285; the sequence is YRLEKTLGKG…LEQIQKHPWY (252 aa). Residues 40–48 and K63 contribute to the ATP site; that span reads LGKGQTGLV. The active-site Proton acceptor is the D156. T189 is modified (phosphothreonine; by LKB1). Residues 314–356 enclose the UBA domain; that stretch reads ELDPDVLESMASLGCFRDRERLHRELRSEEENQEKMIYYLLLD. The span at 362-383 shows a compositional bias: basic and acidic residues; sequence PSCEDQDLPPRNDVDPPRKRVD. The disordered stretch occupies residues 362-548; that stretch reads PSCEDQDLPP…SPGGGVGGAA (187 aa). Phosphoserine is present on residues S399, S443, S447, and S450. Residues 430–457 show a composition bias toward low complexity; that stretch reads SRSVSGASTGLSSSPLSSPRSPVFSFSP. R466, R481, R484, and R498 each carry omega-N-methylarginine. Pro residues predominate over residues 491–508; that stretch reads QPPPPSARSTPLPGPPGS. S508 carries the phosphoserine modification. Residues 509–533 show a composition bias toward low complexity; it reads PRSSGGTPLHSPLHTPRASPTGTPG. Position 525 is an omega-N-methylarginine (R525). Residues T529 and T535 each carry the phosphothreonine modification. R550 is subject to Omega-N-methylarginine. Residues 560–588 form a disordered region; it reads FLGSPRFHRRKMQVPTAEEMSSLTPESSP. At T583 the chain carries Phosphothreonine. S586, S587, and S601 each carry phosphoserine. The interval 719 to 778 is disordered; sequence QPSVQALADEKNGAQTRPAGTPPRSLQPPPGRSDPDLSSSPRRGPPKDKKLLATNGTPLP.

The protein belongs to the protein kinase superfamily. CAMK Ser/Thr protein kinase family. SNF1 subfamily. Mg(2+) serves as cofactor. Post-translationally, phosphorylated at Thr-189 by STK11/LKB1 in complex with STE20-related adapter-alpha (STRADA) pseudo kinase and CAB39. Not phosphorylated at Thr-189 by CaMKK2. In contrast, it is phosphorylated and activated by CaMKK1. May be inactivated via dephosphorylation of Thr-189 by PP2C. Present in the gray matter of the brain and spinal cord (at protein level). Expressed in the nervous system, distributed within the brain and spinal cord of embryonic and postnatal animals.

It is found in the cytoplasm. It localises to the nucleus. The protein resides in the cytoskeleton. The protein localises to the microtubule organizing center. Its subcellular location is the centrosome. It is found in the synapse. It localises to the presynaptic active zone. The protein resides in the cytoplasmic vesicle. The protein localises to the secretory vesicle. Its subcellular location is the synaptic vesicle. The enzyme catalyses L-seryl-[protein] + ATP = O-phospho-L-seryl-[protein] + ADP + H(+). It carries out the reaction L-threonyl-[protein] + ATP = O-phospho-L-threonyl-[protein] + ADP + H(+). The catalysed reaction is L-seryl-[tau protein] + ATP = O-phospho-L-seryl-[tau protein] + ADP + H(+). It catalyses the reaction L-threonyl-[tau protein] + ATP = O-phospho-L-threonyl-[tau protein] + ADP + H(+). Activated by phosphorylation on Thr-189 by STK11/LKB1. Serine/threonine-protein kinase that plays a key role in polarization of neurons and centrosome duplication. Phosphorylates CDC25B, CDC25C, MAPT/TAU, RIMS1, TUBG1, TUBG2 and WEE1. Following phosphorylation and activation by STK11/LKB1, acts as a key regulator of polarization of cortical neurons, probably by mediating phosphorylation of microtubule-associated proteins such as MAPT/TAU at 'Thr-504' and 'Ser-554'. Also regulates neuron polarization by mediating phosphorylation of WEE1 at 'Ser-642' in postmitotic neurons, leading to down-regulate WEE1 activity in polarized neurons. In neurons, localizes to synaptic vesicles and plays a role in neurotransmitter release, possibly by phosphorylating RIMS1. Also acts as a positive regulator of centrosome duplication by mediating phosphorylation of gamma-tubulin (TUBG1 and TUBG2) at 'Ser-131', leading to translocation of gamma-tubulin and its associated proteins to the centrosome. Involved in the UV-induced DNA damage checkpoint response, probably by inhibiting CDK1 activity through phosphorylation and activation of WEE1, and inhibition of CDC25B and CDC25C. This is Serine/threonine-protein kinase BRSK1 (Brsk1) from Mus musculus (Mouse).